The sequence spans 319 residues: Acetyl-coenzyme A carboxylase carboxyl transferase subunit beta (319 aa).

The CoA carboxyltransferase N-terminal domain maps to 24 to 293 (LWIKCPDTGQ…MIEQEPEPSA (270 aa)). The tract at residues 282–319 (PEMIEQEPEPSAPVPPDEPDEPAATQEAPPAAPAAPPA) is disordered.

It belongs to the AccD/PCCB family. In terms of assembly, acetyl-CoA carboxylase is a heterohexamer composed of biotin carboxyl carrier protein (AccB), biotin carboxylase (AccC) and two subunits each of ACCase subunit alpha (AccA) and ACCase subunit beta (AccD).

Its subcellular location is the cytoplasm. The enzyme catalyses N(6)-carboxybiotinyl-L-lysyl-[protein] + acetyl-CoA = N(6)-biotinyl-L-lysyl-[protein] + malonyl-CoA. The protein operates within lipid metabolism; malonyl-CoA biosynthesis; malonyl-CoA from acetyl-CoA: step 1/1. Its function is as follows. Component of the acetyl coenzyme A carboxylase (ACC) complex. Biotin carboxylase (BC) catalyzes the carboxylation of biotin on its carrier protein (BCCP) and then the CO(2) group is transferred by the transcarboxylase to acetyl-CoA to form malonyl-CoA. In Nitrobacter winogradskyi (strain ATCC 25391 / DSM 10237 / CIP 104748 / NCIMB 11846 / Nb-255), this protein is Acetyl-coenzyme A carboxylase carboxyl transferase subunit beta.